Here is a 538-residue protein sequence, read N- to C-terminus: Cytochrome P450 monooxygenase flvC (538 aa).

A helical transmembrane segment spans residues 17–37 (TVLIAGLLVYWVGSAIFLAVL). Cysteine 478 contacts heme.

It belongs to the cytochrome P450 family. The cofactor is heme.

It is found in the membrane. The enzyme catalyses pre-flavunoidine + reduced [NADPH--hemoprotein reductase] + O2 = 10-hydroxy-pre-flavunoidine + oxidized [NADPH--hemoprotein reductase] + H2O + H(+). It functions in the pathway secondary metabolite biosynthesis; terpenoid biosynthesis. Cytochrome P450 monooxygenase; part of the gene cluster that mediates the biosynthesis of flavunoidine, an alkaloidal terpenoid with a tetracyclic cage-like core connected to dimethylcadaverine via a C-N bond and acylated with 5,5-dimethyl-L-pipecolate. The tetracyclic core is synthesized by the terpene cyclase flvE and the cytochrome P450 monooxygenase flvD. The terpene cyclase flvE catalyzes the cyclization of farnesyl pyrophosphate (FPP) to form (1R,4R,5S)-(+)-acoradiene and the cytochrome P450 monooxygenase flvD is then responsible for oxidative conversion of (1R,4R,5S)-(+)-acoradiene into the tetracyclic cage present in the final product flavunoidine. In parallel, the N-methyltransferase flvH dimethylates L-lysine to give N,N-dimethyl-L-Lysin which is decarboxylated by flvG to afford dimethylcadaverine. The terpene cyclase-like protein flvF is the enzyme that attaches the dimethylcadaverine precusor at the C-7 of the tetracyclic cage to yield pre-flavunoidine. The cytochrome monooxygenase flvC hydroxylates the C-10 position of pre-flavunoidine whereas the NRPS flvI acylates the terpenoid core at the hydroxylated C-10 with dimethylpipecolate to yield final flavunoidine. The bifunctional enzyme flvA and the dehydrogenase flvB are responsible for the synthesis of the dimethylpipecolate precursor. The PLP-dependent lyase domain of flvA might use L-O-acetyl-homoserine and alpha-keto-isovalerate to form an intermediary ketone that can cyclize intramolecularly to yield an imine. The imine can be reduced by flvB to yield the 6-carboxylated pipecolate. The C-terminal alpha-KG-dependent oxygenase domain of flvA is then proposed to catalyze the decarboxylation to yield dimethylpipecolate. This chain is Cytochrome P450 monooxygenase flvC, found in Aspergillus flavus (strain ATCC 200026 / FGSC A1120 / IAM 13836 / NRRL 3357 / JCM 12722 / SRRC 167).